Consider the following 282-residue polypeptide: Small ribosomal subunit protein uS2 (282 aa).

The interval 260-282 is disordered; the sequence is KRRRSKVYKEEEREVVTNEDESR. Over residues 266-282 the composition is skewed to basic and acidic residues; sequence VYKEEEREVVTNEDESR.

It belongs to the universal ribosomal protein uS2 family.

The sequence is that of Small ribosomal subunit protein uS2 from Wolbachia sp. subsp. Drosophila simulans (strain wRi).